The primary structure comprises 301 residues: Dimethylsulfoniopropionate lyase (301 aa).

Residues Cys111 and Cys230 each act as proton donor/acceptor in the active site.

The protein belongs to the aspartate/glutamate racemases family. ALMA1 subfamily. As to quaternary structure, homotetramer.

The enzyme catalyses S,S-dimethyl-beta-propiothetin = acrylate + dimethyl sulfide + H(+). Functionally, mediates cleavage of dimethylsulfoniopropionate (DMSP) into dimethyl sulfide (DMS) and acrylate. DMS is the principal form by which sulfur is transported from oceans to the atmosphere and is a key component of the ocean sulfur cycle. This Durusdinium sp. clade D (Symbiodinium sp. clade D) protein is Dimethylsulfoniopropionate lyase.